Here is a 128-residue protein sequence, read N- to C-terminus: Large ribosomal subunit protein bL17 (128 aa).

Belongs to the bacterial ribosomal protein bL17 family. As to quaternary structure, part of the 50S ribosomal subunit. Contacts protein L32.

The protein is Large ribosomal subunit protein bL17 of Streptococcus pneumoniae serotype 2 (strain D39 / NCTC 7466).